A 526-amino-acid chain; its full sequence is MFAPSYDAVLSYTSIGGVQCPRLCYKLVLVTVGLCFCIFCTSLDNTIVATAVPRITQQFHSLDDVGWYASAYLLTTCAVTLPFGRLYTFFPIKWVYLSALFVFELGSFICGITPSSLGLILGRAVAGLGGGGLFSGSLLIITQCVPLRRRPAFSGFIMSIFAVASVIAPLMGGAFTDHISWRWCFYINLPFGLVSAVVIFFTFQTTKPVVQASLREKAAGLDPLGTATFLPAIVCLLLATQWGGAQYPWGDGRIIALFTLFGVLLACFVGLQLWARERATLPPRLLRGRNIWGSALYGFCLNGAMFTFVYYLPIWFQAVQGTSATESGIRNLPLVISNVIFAIISGVLVSATGYFGPFMLLSAAMASIAAGLLSMLHPSSGAGEWIGYQVLLGSSIGMGFQLPVFVVQTTLASTDIPTATALMTFIQLLGGAIFVSVAQNVFRNQLAADIRAALPMLDPKAVINAGPTSLRAMYSGETLTTLVAMYNDAVVHTFYLAIGLAAASFLAATVIQWRPSPKSISHPDSS.

Transmembrane regions (helical) follow at residues 23–43, 64–84, 89–109, 125–145, 155–175, 183–203, 218–238, 254–274, 296–316, 339–359, 360–380, 386–406, 418–438, and 491–511; these read LCYK…CTSL, DVGW…LPFG, FFPI…GSFI, VAGL…TQCV, GFIM…GGAF, WCFY…FFTF, AAGL…CLLL, IIAL…LQLW, LYGF…PIWF, VIFA…GPFM, LLSA…HPSS, IGYQ…PVFV, TATA…VSVA, and VHTF…ATVI.

Belongs to the major facilitator superfamily. TCR/Tet family.

It localises to the cell membrane. Functionally, efflux pump; part of the gene cluster that mediates the biosynthesis of aurasperone B, a dimeric gamma-naphthopyrone. This chain is Efflux pump aunC, found in Aspergillus niger (strain ATCC 1015 / CBS 113.46 / FGSC A1144 / LSHB Ac4 / NCTC 3858a / NRRL 328 / USDA 3528.7).